Consider the following 338-residue polypeptide: Malate dehydrogenase, mitochondrial (338 aa).

The transit peptide at 1–24 (MLSALARPAGAALRRSFSTSAQNN) directs the protein to the mitochondrion. NAD(+) contacts are provided by residues 31–37 (GASGGIG) and Asp-57. O-linked (GalNAc...) serine glycosylation occurs at Ser-33. N6-acetyllysine; alternate is present on residues Lys-78 and Lys-91. 2 positions are modified to N6-succinyllysine; alternate: Lys-78 and Lys-91. Substrate is bound by residues Arg-104 and Arg-110. Residues Asn-117 and 140 to 142 (ISN) each bind NAD(+). A substrate-binding site is contributed by Asn-142. The residue at position 165 (Lys-165) is an N6-acetyllysine. Residue Asp-173 is the Proton relay of the active site. Position 176 (Arg-176) interacts with substrate. At Lys-185 the chain carries N6-acetyllysine; alternate. N6-succinyllysine; alternate is present on Lys-185. His-200 (proton acceptor) is an active-site residue. The residue at position 203 (Lys-203) is an N6-succinyllysine. N6-acetyllysine; alternate occurs at positions 215 and 239. N6-succinyllysine; alternate is present on residues Lys-215 and Lys-239. Lys-239 is modified (N6-malonyllysine; alternate). Ser-246 is subject to Phosphoserine. Met-251 provides a ligand contact to NAD(+). Lys-269 carries the N6-succinyllysine modification. Residues Lys-296, Lys-301, Lys-307, Lys-314, and Lys-324 each carry the N6-acetyllysine; alternate modification. Residues Lys-296, Lys-301, Lys-307, Lys-314, and Lys-324 each carry the N6-succinyllysine; alternate modification. Position 307 is an N6-malonyllysine; alternate (Lys-307). Ser-326 bears the Phosphoserine mark. Lys-328, Lys-329, and Lys-335 each carry N6-acetyllysine; alternate. An N6-succinyllysine; alternate modification is found at Lys-328. N6-malonyllysine; alternate is present on Lys-329. Lys-335 bears the N6-succinyllysine; alternate mark.

Belongs to the LDH/MDH superfamily. MDH type 1 family. Homodimer. In terms of processing, acetylation is enhanced after treatment either with trichostin A (TSA) or with nicotinamide (NAM) with the appearance of tri- and tetraacetylations. Glucose also increases acetylation. Ubiquitously expressed. Highly expressed in skeletal muscle and heart. Also expressed in liver, ileum, colon, kidney and adipose tissue, and at very low levels in lung, pancreas, stomach and spleen.

The protein localises to the mitochondrion matrix. It catalyses the reaction (S)-malate + NAD(+) = oxaloacetate + NADH + H(+). Enzyme activity is enhanced by acetylation. The protein is Malate dehydrogenase, mitochondrial of Felis catus (Cat).